A 457-amino-acid polypeptide reads, in one-letter code: 4-hydroxybenzoate transporter PcaK (457 aa).

Residues 1-34 (MPKEANMASQDYATQRSSLDAQALINDAPLSRYQ) lie on the Cytoplasmic side of the membrane. A helical membrane pass occupies residues 35–55 (WLIAIVCFLIVFVDGIDTAAM). Over 56–72 (GFIAPALAQDWGVDRSQ) the chain is Periplasmic. The chain crosses the membrane as a helical span at residues 73–93 (LGPVMSAALGGMIIGALVSGP). Residues 94-101 (TADRFGRK) lie on the Cytoplasmic side of the membrane. The helical transmembrane segment at 102–122 (IVLSMSMLVFGGFTLACAYST) threads the bilayer. Residues 123–128 (NLDSLV) are Periplasmic-facing. A helical transmembrane segment spans residues 129–149 (IFRFLTGIGLGAAMPNATTLF). The Cytoplasmic segment spans residues 150–168 (SEYCPARIRSLLVTCMFCG). The helical transmembrane segment at 169 to 189 (YNLGMAIGGFISSWLIPAFGW) threads the bilayer. Residues 190-191 (HS) are Periplasmic-facing. Residues 192–212 (LFLLGGWAPLILMLLVIFFLP) traverse the membrane as a helical segment. Residues 213–274 (ESYRFLIVKG…LFSAKYVKGT (62 aa)) lie on the Cytoplasmic side of the membrane. A helical membrane pass occupies residues 275–295 (VLLWVTYFMGLVMIYLLTSWL). The Periplasmic segment spans residues 296 to 310 (PTLMRETGASLERAA). The helical transmembrane segment at 311–331 (FLGGLFQFGGVLSALFIGWAM) threads the bilayer. Over 332–338 (DRFNPNR) the chain is Cytoplasmic. The helical transmembrane segment at 339 to 359 (IIAGFYLAAGIFAVIVGQSLS) threads the bilayer. The Periplasmic portion of the chain corresponds to 360–363 (NPTL). The chain crosses the membrane as a helical span at residues 364 to 384 (LALFILCAGIAVNGAQSSMPV). The Cytoplasmic segment spans residues 385–400 (LSARFYPTQCRATGVA). A helical membrane pass occupies residues 401–421 (WMSGIGRFGAVFGAWIGAVLL). Topologically, residues 422-426 (GNNWS) are periplasmic. Residues 427–447 (FTMILSMLIIPAAAAAIAIFV) traverse the membrane as a helical segment. The Cytoplasmic portion of the chain corresponds to 448 to 457 (KSLVAHTDAT).

The protein belongs to the major facilitator superfamily. Aromatic acid:H(+) symporter (AAHS) (TC 2.A.1.15) family. As to quaternary structure, homotrimer.

The protein resides in the cell inner membrane. Its function is as follows. Uptake of 4-hydroxybenzoate (4-HB). Can also transport a variety of aromatic acids with hydroxyl substitutions at the 2-, 3- and 4-positions, such as salicylate, 2,4-dihydroxybenzoate, protocatechuate, 3-hydroxybenzoate, vanillate and gentisate. This is 4-hydroxybenzoate transporter PcaK from Acinetobacter baylyi (strain ATCC 33305 / BD413 / ADP1).